Here is a 342-residue protein sequence, read N- to C-terminus: Endo-1,4-beta-xylanase A (342 aa).

The region spanning 11–342 (EMLNLSLAKT…KEALYRILRF (332 aa)) is the GH10 domain. Glutamate 144 acts as the Proton donor in catalysis. Glutamate 252 (nucleophile) is an active-site residue.

The protein belongs to the glycosyl hydrolase 10 (cellulase F) family. Cytoplasmic xylanase subfamily.

The protein localises to the cytoplasm. It catalyses the reaction Endohydrolysis of (1-&gt;4)-beta-D-xylosidic linkages in xylans.. The protein operates within glycan degradation; xylan degradation. This chain is Endo-1,4-beta-xylanase A (xynA), found in Caldicellulosiruptor saccharolyticus (Caldocellum saccharolyticum).